A 118-amino-acid chain; its full sequence is Large ribosomal subunit protein bL20 (118 aa).

It belongs to the bacterial ribosomal protein bL20 family.

Binds directly to 23S ribosomal RNA and is necessary for the in vitro assembly process of the 50S ribosomal subunit. It is not involved in the protein synthesizing functions of that subunit. This Pectobacterium atrosepticum (strain SCRI 1043 / ATCC BAA-672) (Erwinia carotovora subsp. atroseptica) protein is Large ribosomal subunit protein bL20.